Consider the following 340-residue polypeptide: MALSLVLGLALSALVIGIRPQVAVPFGLSVLGSALLGSLLLPVLRRWKAGQVIREEGPQSHHKKAGTPTMGGLSFLPVGLLVAGIGSGWDPQWLAVALLTLAYTVVGWLDDWLVIRQRSNKGLSAKSKLLLQVGIGLVFCGYLAWQGIPTVLTLPGIGALPLGWLFWPLALFVLVGTNNAVNLADGMDGLAAGMVALVLAGLGLTAADPVLALVAFALSGTCLGFLVHNHHRARLFMGDTGSLGLGGALAGLALLGDQLWALAWMGAVLVAEALSVILQVGYFQYTKRKTGQGKRLLRMSPLHHHLELGGWSEVQVVGCFYGLTALLVGLGWAWWHWAGA.

9 helical membrane passes run 24 to 44 (VPFGLSVLGSALLGSLLLPVL), 69 to 89 (TMGGLSFLPVGLLVAGIGSGW), 95 to 115 (AVALLTLAYTVVGWLDDWLVI), 129 to 149 (LLLQVGIGLVFCGYLAWQGIP), 156 to 176 (GIGALPLGWLFWPLALFVLVG), 196 to 216 (ALVLAGLGLTAADPVLALVAF), 235 to 255 (LFMGDTGSLGLGGALAGLALL), 260 to 280 (WALAWMGAVLVAEALSVILQV), and 316 to 336 (VVGCFYGLTALLVGLGWAWWH).

It belongs to the glycosyltransferase 4 family. MraY subfamily. Requires Mg(2+) as cofactor.

It localises to the cell inner membrane. The catalysed reaction is UDP-N-acetyl-alpha-D-muramoyl-L-alanyl-gamma-D-glutamyl-meso-2,6-diaminopimeloyl-D-alanyl-D-alanine + di-trans,octa-cis-undecaprenyl phosphate = di-trans,octa-cis-undecaprenyl diphospho-N-acetyl-alpha-D-muramoyl-L-alanyl-D-glutamyl-meso-2,6-diaminopimeloyl-D-alanyl-D-alanine + UMP. The protein operates within cell wall biogenesis; peptidoglycan biosynthesis. Functionally, catalyzes the initial step of the lipid cycle reactions in the biosynthesis of the cell wall peptidoglycan: transfers peptidoglycan precursor phospho-MurNAc-pentapeptide from UDP-MurNAc-pentapeptide onto the lipid carrier undecaprenyl phosphate, yielding undecaprenyl-pyrophosphoryl-MurNAc-pentapeptide, known as lipid I. The protein is Phospho-N-acetylmuramoyl-pentapeptide-transferase of Synechococcus sp. (strain JA-3-3Ab) (Cyanobacteria bacterium Yellowstone A-Prime).